A 1379-amino-acid polypeptide reads, in one-letter code: MDAIHPVSLRNSKRHPLLHSERNLSRRAVSPSISRSFFQHSNGSFPLFQNHRKSLPSAIYKSVDPYVDANPLDPLAAAKASFADFPEQDDSQSSTSPLSSKYHTKKNKQIFVEDSRRGGAASNAAAIAAKKSGYYERTSTRKRSLTVPTPRTSFPHHPRSRRFSLKNAAIATSYHKFKPLSSNSLSSSGMHFSASKQAFNSPLLQTFSPSPSVSPFSNPAVEKLKTSASKQAAEAQSLREFDFFTPTPEPSDKNLEKLKNGASKQASESQSLKNMESLSLARSSPILTSEKLKNGASKQAIESPPFRASEPLPSSNIIPNPAMERLKNGASKLAIESQPFKSAEPLSSAIPLPNPMSEKMRNGASKQAIMAQSSKINPLPPLTASISDPSFEKLKNTASKQAIESQSLMNSGPELLEPSISDPMLEKMKTDAGKQTVESLSLKSSDATIPKPSVSDLGVEKLKNDASKCAVESQSLMINDPSVSSTSFYNPNMEKLKNGAIKQAIEHQALNAAILNKTQLPYFHQSSSELPISASKRAALSQQTESASKSSSNISEMCDSHPPSNFSISASQQASKDRFSEATSSIDLDLSPGRSLSLASSKLSVKEAGARVYNRSVATPVMTPSNPFEISKSASQLASIAQVPVSEPAKTSEVNLKKSLSLASSKLSFQEAGTSLKEKTANVQHSPEVLNDRSLASLSASRHADAISSKSKQHTEIAQPAFNTTGTVLMKTKSNLSDSALSTPQHSDSVLFDITSKAARLASTCAKTDLHRKPRRKHKSFTLENYFGHNAEDESPQSDEVESQTPPSGYSENDIGGTDIYPFALQGAALAAAKDFSRREASLSDSQSAASMDMLPMKKKLSHSSASSTRSIKSLLTNANQKHIHSSINETDDIPTMAAHIVATGQKNKEKAPSFSNDQALDHLLGSAHKRIPSNKTEWSSSSLHIPSHNSFSDIHHRKIAAHAAAITAASEKLTPSIEETSYSSSKAHDASLSAATLVANKDKLIHAPTPQVLAPVLPKVSLPHRHSVSLGQIRGESEVEGDVFYDAPSDKEDLGSSNAPLDVPHGANRSSMDEVNGSKYDYSDGILDGSGQYTDSDMSDDENSLKDSQSSVLSFSAVPTKVLKFKLRDVLGSEYSPSPQLLASSSDVSGSSSAVRAAMKADKIFPAVHENPPPLKTKQSIAKPSPHTLRVPQKKHKHFYHRDDGKYKSGTNLRKSETVDLPQFFIDENRRKLYEGLWAANKGYLLSKSEYSKPNDLICNIVVRELWSRSGAPTSVLAKIYDLVDRHHTGVLGRDEFIVGMFLIDQYLKGRKLPLKVPDSVWLSSKRMGDMLWRLEKLQKKTDNKKPFFKKKKKKRKHLKKFFDFNTTAKVNEGAMTD.

8 disordered regions span residues 1–25, 138–159, 240–314, 337–370, 534–573, 768–816, 1047–1110, and 1168–1208; these read MDAI…RNLS, TSTR…HHPR, EFDF…PLPS, SQPF…QAIM, ASKR…ASQQ, TDLH…NDIG, DAPS…KDSQ, and AVHE…DGKY. Positions 250-259 are enriched in basic and acidic residues; that stretch reads PSDKNLEKLK. A compositionally biased stretch (polar residues) spans 262 to 287; it reads ASKQASESQSLKNMESLSLARSSPIL. The segment covering 541 to 555 has biased composition (low complexity); that stretch reads SQQTESASKSSSNIS. A compositionally biased stretch (polar residues) spans 562 to 573; sequence PPSNFSISASQQ. The segment covering 770–780 has biased composition (basic residues); it reads LHRKPRRKHKS. Residues 793–802 are compositionally biased toward acidic residues; the sequence is DESPQSDEVE. One can recognise an EH domain in the interval 1240 to 1329; the sequence is AANKGYLLSK…DSVWLSSKRM (90 aa). One can recognise an EF-hand domain in the interval 1273 to 1308; sequence APTSVLAKIYDLVDRHHTGVLGRDEFIVGMFLIDQY.

It belongs to the IRS4 family.

Its function is as follows. Positive regulator of phosphatidylinositol 4,5-bisphosphate turnover and negatively regulates signaling through the cell integrity pathway. Involved in rDNA silencing. The protein is Increased rDNA silencing protein 4 homolog of Schizosaccharomyces pombe (strain 972 / ATCC 24843) (Fission yeast).